We begin with the raw amino-acid sequence, 389 residues long: Xylose isomerase (389 aa).

Catalysis depends on residues histidine 101 and aspartate 104. Positions 232, 268, 271, 296, 307, and 309 each coordinate Mg(2+).

The protein belongs to the xylose isomerase family. In terms of assembly, homotetramer. Mg(2+) is required as a cofactor.

It is found in the cytoplasm. The catalysed reaction is alpha-D-xylose = alpha-D-xylulofuranose. The polypeptide is Xylose isomerase (Lactococcus lactis subsp. cremoris (strain SK11)).